Here is a 189-residue protein sequence, read N- to C-terminus: Inosine triphosphate pyrophosphatase (189 aa).

8-13 serves as a coordination point for ITP; the sequence is TGNANK. Glu-39 is a binding site for Mg(2+). ITP contacts are provided by residues Lys-51, 67–68, Lys-84, 143–146, Lys-167, and 172–173; these read DT, FGWD, and HR.

Belongs to the HAM1 NTPase family. In terms of assembly, homodimer. Mg(2+) is required as a cofactor. Mn(2+) serves as cofactor.

The protein localises to the cytoplasm. Its subcellular location is the nucleus. The enzyme catalyses ITP + H2O = IMP + diphosphate + H(+). It carries out the reaction dITP + H2O = dIMP + diphosphate + H(+). The catalysed reaction is XTP + H2O = XMP + diphosphate + H(+). Functionally, pyrophosphatase that hydrolyzes non-canonical purine nucleotides such as inosine triphosphate (ITP), deoxyinosine triphosphate (dITP) or xanthosine 5'-triphosphate (XTP) to their respective monophosphate derivatives. The enzyme does not distinguish between the deoxy- and ribose forms. Probably excludes non-canonical purines from RNA and DNA precursor pools, thus preventing their incorporation into RNA and DNA and avoiding chromosomal lesions. This is Inosine triphosphate pyrophosphatase from Cryptococcus neoformans var. neoformans serotype D (strain JEC21 / ATCC MYA-565) (Filobasidiella neoformans).